Reading from the N-terminus, the 128-residue chain is MARILILLLGGLVVLCAGHGVFMDKLSSKKLCADEECVYTISLARAQEDYNAPDCRFIDVKKGQQIYVYSKLVTENGAGEFWAGSVYGDHQDEMGIVGYFPSNLVKEQRVYQEATKEIPTTDIDFFCE.

A signal peptide spans 1–18 (MARILILLLGGLVVLCAG). Disulfide bonds link C32/C37 and C55/C127. The region spanning 39–110 (YTISLARAQE…PSNLVKEQRV (72 aa)) is the SH3 domain.

The protein belongs to the MIA/OTOR family. In terms of tissue distribution, highly expressed in cochlea.

It is found in the secreted. This chain is Otoraplin (Otor), found in Mus musculus (Mouse).